The chain runs to 445 residues: Tubby-like F-box protein 14 (445 aa).

The F-box domain maps to 56-114; it reads SSCWANLPPELLRDVIERLEASEAAWPSRKNVVACAAVCRTWRDMCREIVKNPEFCGKI.

Belongs to the TUB family. In terms of tissue distribution, ubiquitous.

The polypeptide is Tubby-like F-box protein 14 (TULP14) (Oryza sativa subsp. japonica (Rice)).